Consider the following 309-residue polypeptide: MPIRVQDELPAVNFLRNENVFVMTTTRATTQEIRPLKVLILNLMPKKIETENQFLRLLSNSPLQVDIQLLRIDARESRNTPAEHLNNFYCNFDEICDQNFDGLIVTGAPLGLVEFNDVAYWPQIKQVLEWAKDHVTSTLFVCWAVQAALNILYGIPKQTRAEKISGVYEHHILHPHALLTRGFDDSFLAPHSRYADFPAGLIRDYTDLEILAETEEGDAYLFASKDKRIAFVTGHPEYDANTLASEYFRDVEAGLNPEIPHNYFPQNDPQNKPRATWRSHGNLLFANWLNYYVYQITPYDLRHMNPTLE.

Cys142 (acyl-thioester intermediate) is an active-site residue. Substrate is bound by residues Lys163 and Ser192. His235 (proton acceptor) is an active-site residue. The active site involves Glu237. Arg249 is a binding site for substrate.

Belongs to the MetA family.

It localises to the cytoplasm. It catalyses the reaction L-homoserine + succinyl-CoA = O-succinyl-L-homoserine + CoA. It functions in the pathway amino-acid biosynthesis; L-methionine biosynthesis via de novo pathway; O-succinyl-L-homoserine from L-homoserine: step 1/1. Functionally, transfers a succinyl group from succinyl-CoA to L-homoserine, forming succinyl-L-homoserine. This is Homoserine O-succinyltransferase from Klebsiella pneumoniae subsp. pneumoniae (strain ATCC 700721 / MGH 78578).